Reading from the N-terminus, the 518-residue chain is Subtilisin-like serine protease Cla h 9.0101 (518 aa).

A signal peptide spans 1-16 (MRGALAGLSLATLATA). Residues 17–138 (SPVLVNSIHN…ERDQEVHVLG (122 aa)) constitute a propeptide, removed in mature form. An Inhibitor I9 domain is found at 44-136 (YMIKFKDHVT…LVERDQEVHV (93 aa)). Residues 148–454 (PWGLARISHR…GGESNYSAIV (307 aa)) enclose the Peptidase S8 domain. Residues D184 and H216 each act as charge relay system in the active site. Residues 244-298 (RSNGSGSMSDVVKGVEYAAESHLEQVSITKKGKRKGFKGSTANMSLGGGKSPILD) are igE-binding. N-linked (GlcNAc...) asparagine glycans are attached at residues N246 and N286. The active-site Charge relay system is the S382. N-linked (GlcNAc...) asparagine glycosylation occurs at N449. A propeptide spans 460 to 518 (KATHRPTMLEEIESEAKVASKKVYSEGDELAHKVAELTEKVEDLIAGELKDMFRELKRE) (removed in mature form).

It belongs to the peptidase S8 family.

Its function is as follows. Serine protease. The polypeptide is Subtilisin-like serine protease Cla h 9.0101 (Davidiella tassiana (Mycosphaerella tassiana)).